A 274-amino-acid polypeptide reads, in one-letter code: tRNA-cytidine(32) 2-sulfurtransferase (274 aa).

Residues 40–45 carry the PP-loop motif motif; that stretch reads SGGKDS. Residues Cys-115, Cys-118, and Cys-206 each coordinate [4Fe-4S] cluster.

It belongs to the TtcA family. As to quaternary structure, homodimer. Requires Mg(2+) as cofactor. [4Fe-4S] cluster serves as cofactor.

The protein resides in the cytoplasm. It catalyses the reaction cytidine(32) in tRNA + S-sulfanyl-L-cysteinyl-[cysteine desulfurase] + AH2 + ATP = 2-thiocytidine(32) in tRNA + L-cysteinyl-[cysteine desulfurase] + A + AMP + diphosphate + H(+). It participates in tRNA modification. In terms of biological role, catalyzes the ATP-dependent 2-thiolation of cytidine in position 32 of tRNA, to form 2-thiocytidine (s(2)C32). The sulfur atoms are provided by the cysteine/cysteine desulfurase (IscS) system. The protein is tRNA-cytidine(32) 2-sulfurtransferase of Stutzerimonas stutzeri (strain A1501) (Pseudomonas stutzeri).